The sequence spans 785 residues: E3 UFM1-protein ligase 1 homolog (785 aa).

The tract at residues 404–483 (GGNASNQLDD…GGGGSNKKSV (80 aa)) is disordered.

This sequence belongs to the UFL1 family.

Its function is as follows. E3 UFM1-protein ligase that mediates ufmylation of target proteins. In Drosophila willistoni (Fruit fly), this protein is E3 UFM1-protein ligase 1 homolog.